A 639-amino-acid polypeptide reads, in one-letter code: Splicing factor 1 (639 aa).

Disordered regions lie at residues 1–42 (MATG…VIPP) and 65–94 (LRTG…GKRL). Alanine 2 carries the N-acetylalanine modification. Residue serine 14 is modified to Phosphoserine. A Nuclear localization signal motif is present at residues 15–19 (KKRKR). A Phosphoserine; by PKG modification is found at serine 20. Phosphoserine occurs at positions 80 and 82. The residue at position 87 (tyrosine 87) is a Phosphotyrosine. Serine 89 carries the post-translational modification Phosphoserine. One can recognise a KH domain in the interval 141–222 (MIPQDEYPEI…ENVKKAVEQI (82 aa)). The CCHC-type zinc-finger motif lies at 277–296 (TVCTKCGGAGHIASDCKFQR). Residues 325–639 (VPASVGSTSG…PAPPPPPPQN (315 aa)) are disordered. Positions 335-350 (PATTPLASAPRPAAPA) are enriched in low complexity. Positions 382–394 (MHGGGPGGPGGGP) are enriched in gly residues. Residues 418–447 (NGPPPPWMQPPPPPMNQGPHPPGHHGPPPM) are compositionally biased toward pro residues. Leucine 463 bears the Phosphoserine mark. Lysine 467 bears the Omega-N-methylarginine mark. A compositionally biased stretch (pro residues) spans 470–499 (MPPPPMGMMPPPPPPPSGQPPPPPSGPLPP). Low complexity-rich tracts occupy residues 515–534 (SSMA…TTTT) and 542–566 (PPWQ…NPTM). 2 stretches are compositionally biased toward pro residues: residues 567–591 (VPLP…PPPG) and 598–608 (APPPPPPPPMD). Positions 615–625 (MMGMGVAGMPP) are enriched in low complexity. Residues 626-639 (FGMPPAPPPPPPQN) are compositionally biased toward pro residues.

The protein belongs to the BBP/SF1 family. As to quaternary structure, binds U2AF2. Interacts with U1 snRNA. Binds EWSR1, FUS and TAF15. Interacts with RBM17. In terms of processing, phosphorylation on Ser-20 interferes with U2AF2 binding and spliceosome assembly. Isoform 6 is phosphorylated on Ser-463. In terms of tissue distribution, detected in lung, ovary, adrenal gland, colon, kidney, muscle, pancreas, thyroid, placenta, brain, liver and heart.

Its subcellular location is the nucleus. Functionally, necessary for the ATP-dependent first step of spliceosome assembly. Binds to the intron branch point sequence (BPS) 5'-UACUAAC-3' of the pre-mRNA. May act as transcription repressor. The protein is Splicing factor 1 (SF1) of Homo sapiens (Human).